Reading from the N-terminus, the 373-residue chain is Spore coat polysaccharide biosynthesis protein SpsE (373 aa).

The 63-residue stretch at glycine 305–lysine 367 folds into the AFP-like domain.

It functions in the pathway spore coat biogenesis; spore coat polysaccharide biosynthesis. This chain is Spore coat polysaccharide biosynthesis protein SpsE (spsE), found in Bacillus subtilis (strain 168).